A 428-amino-acid chain; its full sequence is Serine--tRNA ligase (428 aa).

235–237 contributes to the L-serine binding site; sequence TAE. Residue 266–268 coordinates ATP; the sequence is RSE. L-serine is bound at residue glutamate 289. Residue 353-356 participates in ATP binding; the sequence is EISS. Residue serine 389 participates in L-serine binding.

The protein belongs to the class-II aminoacyl-tRNA synthetase family. Type-1 seryl-tRNA synthetase subfamily. Homodimer. The tRNA molecule binds across the dimer.

It is found in the cytoplasm. It carries out the reaction tRNA(Ser) + L-serine + ATP = L-seryl-tRNA(Ser) + AMP + diphosphate + H(+). The enzyme catalyses tRNA(Sec) + L-serine + ATP = L-seryl-tRNA(Sec) + AMP + diphosphate + H(+). It participates in aminoacyl-tRNA biosynthesis; selenocysteinyl-tRNA(Sec) biosynthesis; L-seryl-tRNA(Sec) from L-serine and tRNA(Sec): step 1/1. In terms of biological role, catalyzes the attachment of serine to tRNA(Ser). Is also able to aminoacylate tRNA(Sec) with serine, to form the misacylated tRNA L-seryl-tRNA(Sec), which will be further converted into selenocysteinyl-tRNA(Sec). The sequence is that of Serine--tRNA ligase from Shewanella denitrificans (strain OS217 / ATCC BAA-1090 / DSM 15013).